The sequence spans 150 residues: Large ribosomal subunit protein bL9 (150 aa).

Belongs to the bacterial ribosomal protein bL9 family.

Its function is as follows. Binds to the 23S rRNA. The sequence is that of Large ribosomal subunit protein bL9 from Neisseria meningitidis serogroup C / serotype 2a (strain ATCC 700532 / DSM 15464 / FAM18).